Reading from the N-terminus, the 239-residue chain is Prolactin-8A4 (239 aa).

An N-terminal signal peptide occupies residues 1–31 (MMKLALSQPPFSGTLLMLVVSILLLWEKAAS). Disulfide bonds link cysteine 35–cysteine 42 and cysteine 102–cysteine 215. N-linked (GlcNAc...) asparagine glycans are attached at residues asparagine 211 and asparagine 218. A disulfide bridge links cysteine 232 with cysteine 239.

It belongs to the somatotropin/prolactin family. Placental basal zone cells.

The protein localises to the secreted. This chain is Prolactin-8A4 (Prl8a4), found in Rattus norvegicus (Rat).